We begin with the raw amino-acid sequence, 550 residues long: Tyrosinase HcTyr2 (550 aa).

Cu cation is bound by residues His-56, His-84, His-93, His-282, His-286, and His-326.

The protein belongs to the tyrosinase family. Cu(2+) serves as cofactor.

It carries out the reaction L-tyrosine + O2 = L-dopaquinone + H2O. The enzyme catalyses 2 L-tyrosine + O2 = 2 L-dopa. The catalysed reaction is 2 L-dopa + O2 = 2 L-dopaquinone + 2 H2O. In terms of biological role, copper-containing oxidase that catalyzes the conversion of L-tyrosine to L-dopa and then to L-dopaquinone. Can use various phenols such as p-coumaric acid, phenol, pyrocatechol, syringol or pyrogallol. Accepts several of the constituents of lignin and potentially participates in lignin functionalization. This Hahella sp. (strain CCB-MM4) protein is Tyrosinase HcTyr2.